We begin with the raw amino-acid sequence, 189 residues long: Glutathione-dependent formaldehyde-activating enzyme (189 aa).

The CENP-V/GFA domain maps to Phe20–Asp167. Positions 27, 29, 48, 50, 53, 95, and 98 each coordinate Zn(2+).

Belongs to the Gfa family. Zn(2+) serves as cofactor.

It catalyses the reaction S-(hydroxymethyl)glutathione = glutathione + formaldehyde. The protein operates within one-carbon metabolism; formaldehyde degradation; formate from formaldehyde (glutathione route): step 1/3. In terms of biological role, catalyzes the condensation of formaldehyde and glutathione to S-hydroxymethylglutathione. The protein is Glutathione-dependent formaldehyde-activating enzyme of Rhodopseudomonas palustris (strain BisB18).